The sequence spans 283 residues: Protein/nucleic acid deglycase HchA (283 aa).

Residues histidine 86, glutamate 91, and histidine 123 each contribute to the Zn(2+) site. The active-site Nucleophile is cysteine 185.

This sequence belongs to the peptidase C56 family. HchA subfamily. As to quaternary structure, homodimer.

The protein localises to the cytoplasm. It carries out the reaction N(omega)-(1-hydroxy-2-oxopropyl)-L-arginyl-[protein] + H2O = lactate + L-arginyl-[protein] + H(+). The enzyme catalyses N(6)-(1-hydroxy-2-oxopropyl)-L-lysyl-[protein] + H2O = lactate + L-lysyl-[protein] + H(+). It catalyses the reaction S-(1-hydroxy-2-oxopropyl)-L-cysteinyl-[protein] + H2O = lactate + L-cysteinyl-[protein] + H(+). The catalysed reaction is N(omega)-(1-hydroxy-2-oxoethyl)-L-arginyl-[protein] + H2O = L-arginyl-[protein] + glycolate + H(+). It carries out the reaction N(6)-(1-hydroxy-2-oxoethyl)-L-lysyl-[protein] + H2O = glycolate + L-lysyl-[protein] + H(+). The enzyme catalyses S-(1-hydroxy-2-oxoethyl)-L-cysteinyl-[protein] + H2O = glycolate + L-cysteinyl-[protein] + H(+). It catalyses the reaction N(2)-(1-hydroxy-2-oxopropyl)-dGTP + H2O = lactate + dGTP + H(+). The catalysed reaction is N(2)-(1-hydroxy-2-oxopropyl)-GTP + H2O = lactate + GTP + H(+). It carries out the reaction N(2)-(1-hydroxy-2-oxopropyl)-GDP + H2O = lactate + GDP + H(+). The enzyme catalyses N(2)-(1-hydroxy-2-oxopropyl)-GMP + H2O = lactate + GMP + H(+). It catalyses the reaction N(2)-(1-hydroxy-2-oxoethyl)-dGTP + H2O = dGTP + glycolate + H(+). The catalysed reaction is N(2)-(1-hydroxy-2-oxoethyl)-GTP + H2O = glycolate + GTP + H(+). It carries out the reaction N(2)-(1-hydroxy-2-oxoethyl)-GDP + H2O = glycolate + GDP + H(+). The enzyme catalyses N(2)-(1-hydroxy-2-oxoethyl)-GMP + H2O = glycolate + GMP + H(+). It catalyses the reaction an N(2)-(1-hydroxy-2-oxopropyl)-guanosine in RNA + H2O = a guanosine in RNA + lactate + H(+). The catalysed reaction is an N(2)-(1-hydroxy-2-oxopropyl)-2'-deoxyguanosine in DNA + H2O = a 2'-deoxyguanosine in DNA + lactate + H(+). It carries out the reaction an N(2)-(1-hydroxy-2-oxoethyl)-guanosine in RNA + H2O = a guanosine in RNA + glycolate + H(+). The enzyme catalyses an N(2)-(1-hydroxy-2-oxoethyl)-2'-deoxyguanosine in DNA + H2O = a 2'-deoxyguanosine in DNA + glycolate + H(+). Protein and nucleotide deglycase that catalyzes the deglycation of the Maillard adducts formed between amino groups of proteins or nucleotides and reactive carbonyl groups of glyoxals. Thus, functions as a protein deglycase that repairs methylglyoxal- and glyoxal-glycated proteins, and releases repaired proteins and lactate or glycolate, respectively. Deglycates cysteine, arginine and lysine residues in proteins, and thus reactivates these proteins by reversing glycation by glyoxals. Acts on early glycation intermediates (hemithioacetals and aminocarbinols), preventing the formation of Schiff bases and advanced glycation endproducts (AGE). Also functions as a nucleotide deglycase able to repair glycated guanine in the free nucleotide pool (GTP, GDP, GMP, dGTP) and in DNA and RNA. Is thus involved in a major nucleotide repair system named guanine glycation repair (GG repair), dedicated to reversing methylglyoxal and glyoxal damage via nucleotide sanitization and direct nucleic acid repair. Plays an important role in protecting cells from carbonyl stress. This is Protein/nucleic acid deglycase HchA from Escherichia coli O81 (strain ED1a).